The sequence spans 336 residues: Immune-associated nucleotide-binding protein 6 (336 aa).

One can recognise an AIG1-type G domain in the interval 33 to 241; the sequence is EPVKNVVLVG…FTDTMHRRIQ (209 aa). Residues 42–49 form a G1 region; sequence GRTGNGKS. GTP-binding positions include 42 to 50 and S63; that span reads GRTGNGKSA. The tract at residues 69–73 is G2; it reads GVTTR. The tract at residues 91–94 is G3; it reads DTPG. A G4 region spans residues 161–164; that stretch reads TCGD. A G5 region spans residues 200 to 202; sequence DNR. Residue N201 participates in GTP binding. A coiled-coil region spans residues 237 to 270; sequence HRRIQEEAARVKREEKEIEEKNIADEEKAALKKQ.

The protein belongs to the TRAFAC class TrmE-Era-EngA-EngB-Septin-like GTPase superfamily. AIG1/Toc34/Toc159-like paraseptin GTPase family. IAN subfamily. As to expression, mostly expressed in pollen. Also detected in lateral roots and radicles.

The polypeptide is Immune-associated nucleotide-binding protein 6 (Arabidopsis thaliana (Mouse-ear cress)).